Reading from the N-terminus, the 188-residue chain is Elongation factor P (188 aa).

This sequence belongs to the elongation factor P family.

It is found in the cytoplasm. It participates in protein biosynthesis; polypeptide chain elongation. Functionally, involved in peptide bond synthesis. Stimulates efficient translation and peptide-bond synthesis on native or reconstituted 70S ribosomes in vitro. Probably functions indirectly by altering the affinity of the ribosome for aminoacyl-tRNA, thus increasing their reactivity as acceptors for peptidyl transferase. The sequence is that of Elongation factor P from Methylorubrum extorquens (strain CM4 / NCIMB 13688) (Methylobacterium extorquens).